Consider the following 1175-residue polypeptide: Topoisomerase 1-associated factor 1 (1175 aa).

Disordered stretches follow at residues 894–982 (NYQS…DDEK) and 1043–1175 (SDGD…DDEE). A compositionally biased stretch (basic residues) spans 910–921 (AKKRNSRKKSTK). The span at 930 to 940 (GDSDDDDDDAD) shows a compositional bias: acidic residues. Positions 954-966 (PRDLLFEEPKPLR) are enriched in basic and acidic residues. Positions 1044 to 1053 (DGDDDDDDGN) are enriched in acidic residues. Residues 1078-1096 (ILDSVQSQVLDNGSSQGNF) show a composition bias toward polar residues. Residues 1137–1156 (EEDDNADEDEDEDEDVDGEE) show a composition bias toward acidic residues.

The protein belongs to the timeless family. In terms of assembly, component of the fork protection complex (FPC) consisting of TOF1 and CSM3.

The protein resides in the nucleus. Forms a fork protection complex (FPC) with CSM3 and which is required for chromosome segregation during meiosis and DNA damage repair. FPC coordinates leading and lagging strand synthesis and moves with the replication fork. FPC stabilizes replication forks in a configuration that is recognized by replication checkpoint sensors. The polypeptide is Topoisomerase 1-associated factor 1 (TOF1) (Lodderomyces elongisporus (strain ATCC 11503 / CBS 2605 / JCM 1781 / NBRC 1676 / NRRL YB-4239) (Yeast)).